Reading from the N-terminus, the 475-residue chain is Aminodeoxychorismate synthase component 1 (475 aa).

Belongs to the anthranilate synthase component I family. In terms of assembly, monomer. Heterodimer consisting of two non-identical subunits: a glutamine amidotransferase subunit (PabA) and a aminodeoxychorismate synthase subunit (PabB). Mg(2+) is required as a cofactor.

The enzyme catalyses chorismate + L-glutamine = 4-amino-4-deoxychorismate + L-glutamate. The protein operates within cofactor biosynthesis; tetrahydrofolate biosynthesis; 4-aminobenzoate from chorismate: step 1/2. In terms of biological role, part of a heterodimeric complex that catalyzes the two-step biosynthesis of 4-amino-4-deoxychorismate (ADC), a precursor of p-aminobenzoate (PABA) and tetrahydrofolate. In the first step, a glutamine amidotransferase (PabA) generates ammonia as a substrate that, along with chorismate, is used in the second step, catalyzed by aminodeoxychorismate synthase (PabB) to produce ADC. This is Aminodeoxychorismate synthase component 1 (pabB) from Streptomyces lividans.